A 124-amino-acid polypeptide reads, in one-letter code: Fluoride-specific ion channel FluC 1 (124 aa).

Transmembrane regions (helical) follow at residues Val4–Ile24, Gly36–Val56, Val67–Leu87, and Ala103–Gly123. Residues Gly75 and Thr78 each coordinate Na(+).

It belongs to the fluoride channel Fluc/FEX (TC 1.A.43) family.

The protein localises to the cell membrane. The catalysed reaction is fluoride(in) = fluoride(out). Its activity is regulated as follows. Na(+) is not transported, but it plays an essential structural role and its presence is essential for fluoride channel function. In terms of biological role, fluoride-specific ion channel. Important for reducing fluoride concentration in the cell, thus reducing its toxicity. The protein is Fluoride-specific ion channel FluC 1 of Symbiobacterium thermophilum (strain DSM 24528 / JCM 14929 / IAM 14863 / T).